A 299-amino-acid polypeptide reads, in one-letter code: Pentalenolactone F synthase (299 aa).

Positions 105 and 107 each coordinate Fe cation. 2-oxoglutarate contacts are provided by Thr-133 and Trp-251. A Fe cation-binding site is contributed by His-266. A 2-oxoglutarate-binding site is contributed by Arg-277.

This sequence belongs to the TfdA dioxygenase family. The cofactor is Fe(2+).

The catalysed reaction is pentalenolactone D + 2 2-oxoglutarate + 2 O2 = pentalenolactone F + 2 succinate + 2 CO2 + H2O. The protein operates within antibiotic biosynthesis; pentalenolactone biosynthesis. Its activity is regulated as follows. Activated by ascorbate. Its function is as follows. Catalyzes the Fe(2+) and alpha-ketoglutarate-dependent oxidation of pentalenolactone D to pentalenolactone F in the biosynthesis of pentalenolactone antibiotic. Also able to catalyze the oxidation of pentalenolactone D to pentalenolactone E. In Streptomyces arenae, this protein is Pentalenolactone F synthase (pntD).